The following is a 1466-amino-acid chain: ABC transporter G family member 10 (1466 aa).

The segment covering 23 to 45 has biased composition (low complexity); it reads NTPQYENNNNNNNNTSGNESPNI. The segment at 23–47 is disordered; that stretch reads NTPQYENNNNNNNNTSGNESPNILN. Positions 138–392 constitute an ABC transporter 1 domain; it reads VTIFNLFRPS…FLDLGFDCEP (255 aa). One can recognise an ABC transmembrane type-2 1 domain in the interval 497 to 724; that stretch reads WGDRFALISK…NGSTMSYQDQ (228 aa). 6 consecutive transmembrane segments (helical) span residues 501 to 521, 537 to 557, 586 to 606, 611 to 631, 641 to 661, and 767 to 787; these read FALI…ASLF, AIYA…GLTF, IPLT…MYGL, GKFF…VAFF, LYVS…YGGY, and IITF…LELF. The region spanning 838-1082 is the ABC transporter 2 domain; that stretch reads FTWNHIHYTV…LTSYFERNGV (245 aa). 874 to 881 is an ATP binding site; it reads GSSGAGKT. The ABC transmembrane type-2 2 domain maps to 1177–1399; that stretch reads SYVYGIFTQA…LTCKEYFKPT (223 aa). The next 6 membrane-spanning stretches (helical) occupy residues 1178 to 1198, 1214 to 1234, 1253 to 1273, 1290 to 1310, 1319 to 1339, and 1440 to 1460; these read YVYG…FTFW, IFEI…QFLI, FAIS…TICF, FYFY…GQVV, LAQT…GVLV, and YGIL…FVYL.

The protein belongs to the ABC transporter superfamily. ABCG family. PDR (TC 3.A.1.205) subfamily.

It is found in the membrane. The chain is ABC transporter G family member 10 (abcG10) from Dictyostelium discoideum (Social amoeba).